We begin with the raw amino-acid sequence, 351 residues long: Alanine racemase (351 aa).

The active-site Proton acceptor; specific for D-alanine is the K35. K35 carries the post-translational modification N6-(pyridoxal phosphate)lysine. Residue R127 participates in substrate binding. The active-site Proton acceptor; specific for L-alanine is Y247. M295 contacts substrate.

The protein belongs to the alanine racemase family. It depends on pyridoxal 5'-phosphate as a cofactor.

It carries out the reaction L-alanine = D-alanine. Its pathway is amino-acid biosynthesis; D-alanine biosynthesis; D-alanine from L-alanine: step 1/1. Its function is as follows. Catalyzes the interconversion of L-alanine and D-alanine. May also act on other amino acids. In Vesicomyosocius okutanii subsp. Calyptogena okutanii (strain HA), this protein is Alanine racemase (alr).